A 71-amino-acid polypeptide reads, in one-letter code: Brevinin-1CG4 (71 aa).

The signal sequence occupies residues 1-22; that stretch reads MFTLKKSLLLLFFLGTINLSLC. Residues 23-45 constitute a propeptide, removed in mature form; the sequence is EQERNADEEERRDDSDKRDVEVE. C65 and C71 are joined by a disulfide.

The protein belongs to the frog skin active peptide (FSAP) family. Brevinin subfamily. As to expression, expressed by the skin glands.

The protein resides in the secreted. Functionally, antimicrobial peptide active against a variety of Gram-positive and some Gram-negative bacterial strains. Has antifungal activity against C.albicans ATCC 10231 and a slime mold isolate. Has hemolytic activity against human erythrocytes. This chain is Brevinin-1CG4, found in Amolops chunganensis (Chungan torrent frog).